The sequence spans 104 residues: MFSTSDQVSKMNSRILSALLILGIATCVIAGGFCPKSRHPQCNLSYKINDCCAQSDCRVGSVCCVEGCGNVCRAESDTPLGEKFVDGSECKHGHVFPKKWYQFW.

The signal sequence occupies residues methionine 1–alanine 30. The region spanning glycine 31 to serine 76 is the WAP domain. 5 cysteine pairs are disulfide-bonded: cysteine 34/cysteine 64, cysteine 42/cysteine 68, cysteine 51/cysteine 63, cysteine 52/cysteine 90, and cysteine 57/cysteine 72.

It belongs to the venom protein 11 family. 02 (wap-2) subfamily. Contains 5 disulfide bonds. Expressed by the venom gland.

The protein resides in the secreted. Its function is as follows. Has antibacterial activity. This chain is U20-lycotoxin-Ls1a, found in Lycosa singoriensis (Wolf spider).